We begin with the raw amino-acid sequence, 347 residues long: Olfactory receptor 6J1 (347 aa).

The Extracellular portion of the chain corresponds to 1–24; sequence MGNWTAAVTEFVLLGFSLSREVEL. Asparagine 3 carries N-linked (GlcNAc...) asparagine glycosylation. A helical membrane pass occupies residues 25–45; sequence LLLVLLLPTFLLTLLGNLLII. The Cytoplasmic portion of the chain corresponds to 46 to 53; that stretch reads STVLSCSR. Residues 54 to 74 form a helical membrane-spanning segment; that stretch reads LHTPMYFFLCNLSILDILFTS. Residues 75-98 lie on the Extracellular side of the membrane; sequence VISPKVLANLGSRDKTISFAGCIT. Cysteine 96 and cysteine 188 form a disulfide bridge. Residues 99-119 traverse the membrane as a helical segment; sequence QCYFYFFLGTVEFLLLTVMSY. Residues 120–138 are Cytoplasmic-facing; it reads DRYATICCPLRYTTIMRPS. The chain crosses the membrane as a helical span at residues 139 to 159; the sequence is VCIGTVVFSWVGGFLSVLFPT. Residues 160-196 lie on the Extracellular side of the membrane; it reads ILISQLPFCGSNIINHFFCDSGPLLALACADTTAIEL. A helical membrane pass occupies residues 197 to 216; it reads MDFMLSSMVILCCIVLVAYS. The Cytoplasmic portion of the chain corresponds to 217–236; the sequence is YTYIILTIVRIPSASGRKKA. A helical transmembrane segment spans residues 237 to 257; the sequence is FNTCASHLTIVIISSGITVFI. At 258-270 the chain is on the extracellular side; the sequence is YVTPSQKEYLEIN. Residues 271–291 form a helical membrane-spanning segment; that stretch reads KIPLVLSSVVTPFLNPFIYTL. The Cytoplasmic segment spans residues 292 to 347; sequence RNDTVQGVLRDVWVRVRGVFEKRMRAVLRSRLSSNKDHQGRACSSPPCVYSVKLQC.

This sequence belongs to the G-protein coupled receptor 1 family.

The protein localises to the cell membrane. In terms of biological role, odorant receptor. The sequence is that of Olfactory receptor 6J1 (OR6J1) from Homo sapiens (Human).